A 122-amino-acid chain; its full sequence is Large ribosomal subunit protein uL14 (122 aa).

Belongs to the universal ribosomal protein uL14 family. As to quaternary structure, part of the 50S ribosomal subunit. Forms a cluster with proteins L3 and L19. In the 70S ribosome, L14 and L19 interact and together make contacts with the 16S rRNA in bridges B5 and B8.

Binds to 23S rRNA. Forms part of two intersubunit bridges in the 70S ribosome. The protein is Large ribosomal subunit protein uL14 of Ureaplasma parvum serovar 3 (strain ATCC 27815 / 27 / NCTC 11736).